The following is a 114-amino-acid chain: Large ribosomal subunit protein uL18 (114 aa).

Belongs to the universal ribosomal protein uL18 family. As to quaternary structure, part of the 50S ribosomal subunit; part of the 5S rRNA/L5/L18/L25 subcomplex. Contacts the 5S and 23S rRNAs.

Its function is as follows. This is one of the proteins that bind and probably mediate the attachment of the 5S RNA into the large ribosomal subunit, where it forms part of the central protuberance. In Bacteroides fragilis (strain ATCC 25285 / DSM 2151 / CCUG 4856 / JCM 11019 / LMG 10263 / NCTC 9343 / Onslow / VPI 2553 / EN-2), this protein is Large ribosomal subunit protein uL18.